Consider the following 141-residue polypeptide: Calcium-binding protein SPEC 2D (141 aa).

4 consecutive EF-hand domains span residues 10–42 (DQIKEYKTKFDAFDRNNDGNFPTMFLGNAMKSV), 43–72 (GHVLTAAELENSRRVRKGTTTFPQFLAMIL), 73–107 (DKKCRKVFKAMDKDDKDKLLSADEVRQAMLSFDRQ), and 108–141 (ITEDKIKEMIEKADFPNDGKCSLEEFVKMVMNFC). Ca(2+)-binding residues include D23, N25, D27, and N29. Ca(2+) contacts are provided by D84, D86, K90, D95, D121, D125, K127, and E132.

In terms of tissue distribution, found in cell lineages giving rise to the aboral ectoderm, a squamous epithelium covering the surface of the late stage embryo and larva.

In terms of biological role, calcium-binding protein involved in larval development and metamorphosis. Likely to function as calcium buffers mediating the transport of calcium from the sea water to the blastocoel where calcium is required for skeleton formation. The chain is Calcium-binding protein SPEC 2D (SPEC2D) from Strongylocentrotus purpuratus (Purple sea urchin).